The primary structure comprises 270 residues: Glucosamine-6-phosphate deaminase (270 aa).

Asp72 (proton acceptor; for enolization step) is an active-site residue. Asp141 functions as the For ring-opening step in the catalytic mechanism. His143 serves as the catalytic Proton acceptor; for ring-opening step. Residue Glu148 is the For ring-opening step of the active site.

This sequence belongs to the glucosamine/galactosamine-6-phosphate isomerase family. NagB subfamily.

It carries out the reaction alpha-D-glucosamine 6-phosphate + H2O = beta-D-fructose 6-phosphate + NH4(+). It participates in amino-sugar metabolism; N-acetylneuraminate degradation; D-fructose 6-phosphate from N-acetylneuraminate: step 5/5. With respect to regulation, allosterically activated by N-acetylglucosamine 6-phosphate (GlcNAc6P). Catalyzes the reversible isomerization-deamination of glucosamine 6-phosphate (GlcN6P) to form fructose 6-phosphate (Fru6P) and ammonium ion. The polypeptide is Glucosamine-6-phosphate deaminase (Treponema denticola (strain ATCC 35405 / DSM 14222 / CIP 103919 / JCM 8153 / KCTC 15104)).